The sequence spans 282 residues: 1-deoxy-11-beta-hydroxypentalenate dehydrogenase (282 aa).

12–36 (GAASGIGLALSARFARAGAGVVMAD) lines the NAD(+) pocket. Ser-144 serves as a coordination point for substrate. The active-site Proton acceptor is the Tyr-157. Residue Lys-161 coordinates NAD(+). Positions 258 to 282 (PPPSPEEELWPVPKTTTATTATTKH) are disordered. Over residues 267–282 (WPVPKTTTATTATTKH) the composition is skewed to low complexity.

The protein belongs to the short-chain dehydrogenases/reductases (SDR) family.

It carries out the reaction 1-deoxy-11beta-hydroxypentalenate + NAD(+) = 1-deoxy-11-oxopentalenate + NADH + H(+). The protein operates within antibiotic biosynthesis; pentalenolactone biosynthesis. Its function is as follows. Catalyzes the oxidation of 1-deoxy-11-beta-hydroxypentalenic acid to 1-deoxy-11-oxopentalenic acid in the biosynthesis of pentalenolactone antibiotic. This chain is 1-deoxy-11-beta-hydroxypentalenate dehydrogenase (pntF), found in Streptomyces arenae.